The sequence spans 59 residues: UPF0434 protein HDEF_0234 (59 aa).

Belongs to the UPF0434 family.

In Hamiltonella defensa subsp. Acyrthosiphon pisum (strain 5AT), this protein is UPF0434 protein HDEF_0234.